Consider the following 319-residue polypeptide: Transcription factor STKL2 (319 aa).

Residues 1–119 (MAPLESPATA…NKKANPQRVW (119 aa)) are disordered. Over residues 21-34 (EIFKSSSEESKPKD) the composition is skewed to basic and acidic residues. Positions 38-55 (VPSSKTLKSPSAAVNSKT) are enriched in polar residues. Positions 89 to 112 (RAGEGSTSRDMHVKRVKKEDDNKK) are enriched in basic and acidic residues.

It belongs to the GeBP family. In terms of tissue distribution, expressed strongly in leaves and flowers, weakly in roots, and very weakly in stems.

The protein resides in the nucleus. In terms of biological role, transcription repressor that binds DNA in a sequence-specific manner, 5'-GCCT-3', to regulate the expression of PGR. Acts as a modulatory component for the glucose-triggered developmental leaf growth process. This is Transcription factor STKL2 from Arabidopsis thaliana (Mouse-ear cress).